Reading from the N-terminus, the 366-residue chain is tRNA/tmRNA (uracil-C(5))-methyltransferase (366 aa).

S-adenosyl-L-methionine is bound by residues glutamine 189, tyrosine 217, asparagine 222, glutamate 238, and aspartate 298. The Nucleophile role is filled by cysteine 323. Glutamate 357 (proton acceptor) is an active-site residue.

It belongs to the class I-like SAM-binding methyltransferase superfamily. RNA M5U methyltransferase family. TrmA subfamily.

It carries out the reaction uridine(54) in tRNA + S-adenosyl-L-methionine = 5-methyluridine(54) in tRNA + S-adenosyl-L-homocysteine + H(+). It catalyses the reaction uridine(341) in tmRNA + S-adenosyl-L-methionine = 5-methyluridine(341) in tmRNA + S-adenosyl-L-homocysteine + H(+). Dual-specificity methyltransferase that catalyzes the formation of 5-methyluridine at position 54 (m5U54) in all tRNAs, and that of position 341 (m5U341) in tmRNA (transfer-mRNA). This chain is tRNA/tmRNA (uracil-C(5))-methyltransferase, found in Idiomarina loihiensis (strain ATCC BAA-735 / DSM 15497 / L2-TR).